Reading from the N-terminus, the 642-residue chain is Influenza virus NS1A-binding protein homolog (642 aa).

A BTB domain is found at 32–99 (CDVRLQVCGH…AYTAQLKADK (68 aa)). Residues 134 to 233 (CISYRNFASC…YYSADHKLLD (100 aa)) form the BACK domain. S246, S277, S322, S336, and S338 each carry phosphoserine. A disordered region spans residues 257-281 (KPPRENGHKQISGSSTGCLSSPNAS). The segment covering 265–281 (KQISGSSTGCLSSPNAS) has biased composition (polar residues). 6 Kelch repeats span residues 369–415 (KLIA…VLMG), 416–463 (QLYV…ALNG), 465–512 (LYIV…ELGG), 513–559 (YLYI…VLDG), 561–606 (LFVG…TVGN), and 608–642 (IYAV…IFQF).

It belongs to the BTB-kelch protein family. In terms of assembly, homodimer; through the BTB domain. Interacts with AHR/Aryl hydrocarbon receptor. Interacts (via BACK domain) with pre-mRNA-binding protein HNRNPK; the interaction is direct. Interacts (via BACK domain) with splicing factor PTBP1; the interaction is direct. Interacts (via Kelch repeats) with RNA polymerase POLR2A (via C-terminal domain). Interacts (via BACK domain) with splicing factor SNRPA; the interaction is indirect. Interacts (via Kelch repeats) with splicing factor SART1. Interacts (via BACK domain) with ALYREF; the interaction is indirect and likely plays a role in mRNA nuclear export. Interacts (via Kelch repeats) with KLHL20 (via Kelch repeats); this interaction blocks the assembly of Cul3-KLHL20 complex. As to expression, ubiquitous expression. In the heart, the highest expression is detected in the ventricles and the lowest in the atria. Expressed in dendrites and spines in neurons.

The protein localises to the cytoplasm. The protein resides in the cytoskeleton. It localises to the nucleus. Involved in many cell functions, including pre-mRNA splicing, the aryl hydrocarbon receptor (AHR) pathway, F-actin organization and protein ubiquitination. Plays a role in the dynamic organization of the actin skeleton as a stabilizer of actin filaments by association with F-actin through Kelch repeats. Protects cells from cell death induced by actin destabilization. Functions as a modifier of the AHR/Aryl hydrocarbon receptor pathway increasing the concentration of AHR available to activate transcription. In addition, functions as a negative regulator of BCR(KLHL20) E3 ubiquitin ligase complex to prevent ubiquitin-mediated proteolysis of PML and DAPK1, two tumor suppressors. Inhibits pre-mRNA splicing (in vitro). May play a role in mRNA nuclear export. Functionally, may play a role in cell cycle progression in the nucleus. The chain is Influenza virus NS1A-binding protein homolog from Mus musculus (Mouse).